A 407-amino-acid chain; its full sequence is Carbamoyl phosphate synthase small chain (407 aa).

Residues 1–205 (MTETTSKTAP…LADGYGEQDT (205 aa)) form a CPSase region. L-glutamine is bound by residues S60, G257, and G259. In terms of domain architecture, Glutamine amidotransferase type-1 spans 209–397 (HVVALDFGVK…INLIREKKGE (189 aa)). Catalysis depends on C286, which acts as the Nucleophile. L-glutamine-binding residues include L287, Q290, N328, G330, and F331. Catalysis depends on residues H370 and E372.

This sequence belongs to the CarA family. Composed of two chains; the small (or glutamine) chain promotes the hydrolysis of glutamine to ammonia, which is used by the large (or ammonia) chain to synthesize carbamoyl phosphate. Tetramer of heterodimers (alpha,beta)4.

The catalysed reaction is hydrogencarbonate + L-glutamine + 2 ATP + H2O = carbamoyl phosphate + L-glutamate + 2 ADP + phosphate + 2 H(+). It catalyses the reaction L-glutamine + H2O = L-glutamate + NH4(+). It participates in amino-acid biosynthesis; L-arginine biosynthesis; carbamoyl phosphate from bicarbonate: step 1/1. It functions in the pathway pyrimidine metabolism; UMP biosynthesis via de novo pathway; (S)-dihydroorotate from bicarbonate: step 1/3. Functionally, small subunit of the glutamine-dependent carbamoyl phosphate synthetase (CPSase). CPSase catalyzes the formation of carbamoyl phosphate from the ammonia moiety of glutamine, carbonate, and phosphate donated by ATP, constituting the first step of 2 biosynthetic pathways, one leading to arginine and/or urea and the other to pyrimidine nucleotides. The small subunit (glutamine amidotransferase) binds and cleaves glutamine to supply the large subunit with the substrate ammonia. This chain is Carbamoyl phosphate synthase small chain, found in Brucella anthropi (strain ATCC 49188 / DSM 6882 / CCUG 24695 / JCM 21032 / LMG 3331 / NBRC 15819 / NCTC 12168 / Alc 37) (Ochrobactrum anthropi).